The primary structure comprises 555 residues: 2-succinyl-5-enolpyruvyl-6-hydroxy-3-cyclohexene-1-carboxylate synthase (555 aa).

This sequence belongs to the TPP enzyme family. MenD subfamily. As to quaternary structure, homodimer. Mg(2+) serves as cofactor. Requires Mn(2+) as cofactor. Thiamine diphosphate is required as a cofactor.

The enzyme catalyses isochorismate + 2-oxoglutarate + H(+) = 5-enolpyruvoyl-6-hydroxy-2-succinyl-cyclohex-3-ene-1-carboxylate + CO2. It functions in the pathway quinol/quinone metabolism; 1,4-dihydroxy-2-naphthoate biosynthesis; 1,4-dihydroxy-2-naphthoate from chorismate: step 2/7. It participates in quinol/quinone metabolism; menaquinone biosynthesis. Functionally, catalyzes the thiamine diphosphate-dependent decarboxylation of 2-oxoglutarate and the subsequent addition of the resulting succinic semialdehyde-thiamine pyrophosphate anion to isochorismate to yield 2-succinyl-5-enolpyruvyl-6-hydroxy-3-cyclohexene-1-carboxylate (SEPHCHC). In Cronobacter sakazakii (strain ATCC BAA-894) (Enterobacter sakazakii), this protein is 2-succinyl-5-enolpyruvyl-6-hydroxy-3-cyclohexene-1-carboxylate synthase.